We begin with the raw amino-acid sequence, 264 residues long: Undecaprenyl-diphosphatase (264 aa).

A run of 8 helical transmembrane segments spans residues 15–37 (GLTEFLPVSSTGHLIITGHLLGF), 42–62 (AASFEVAIQLGAILAVVVLYW), 84–104 (YLLFLTSLPASVLGLLAHDFI), 108–128 (LFNPYTVAWALGVGAIMILIV), 143–163 (VTPKLALGIGCFQCLALWPGF), 182–202 (IAAEYSFIAAVPIMFAATGYD), 217–237 (FLAVGFIVSFLSAWAAVKGFI), and 243–263 (LTLRPFAYYRLALAPLVLFFW).

It belongs to the UppP family.

It localises to the cell inner membrane. The enzyme catalyses di-trans,octa-cis-undecaprenyl diphosphate + H2O = di-trans,octa-cis-undecaprenyl phosphate + phosphate + H(+). Its function is as follows. Catalyzes the dephosphorylation of undecaprenyl diphosphate (UPP). Confers resistance to bacitracin. The chain is Undecaprenyl-diphosphatase from Maridesulfovibrio salexigens (strain ATCC 14822 / DSM 2638 / NCIMB 8403 / VKM B-1763) (Desulfovibrio salexigens).